A 444-amino-acid chain; its full sequence is NAD-capped RNA hydrolase NUDT12 (444 aa).

2 ANK repeats span residues 11 to 40 (EIIS…SLLN) and 60 to 80 (SRQT…ANLL). An N6-succinyllysine modification is found at K167. Zn(2+) is bound by residues C266 and C269. K274 is subject to N6-succinyllysine. Residues C284 and C289 each coordinate Zn(2+). Substrate is bound by residues Y300, 336-338 (AGF), E352, E356, and E397. Residues 301–435 (PRVDPVVIMQ…SRAIAHQLIK (135 aa)) enclose the Nudix hydrolase domain. 4 residues coordinate Mg(2+): A336, E352, E356, and E397. The Nudix box motif lies at 337 to 358 (GFIEPGETIEDAVRREVEEESG). A Microbody targeting signal motif is present at residues 442-444 (PNL).

Belongs to the Nudix hydrolase family. NudC subfamily. As to quaternary structure, homodimer. Homodimerization is essential for its catalytic activity and protein stability. Interacts (via ANK repeats) with BLMH. The cofactor is Mg(2+). Requires Zn(2+) as cofactor.

Its subcellular location is the cytoplasm. It localises to the peroxisome. The protein localises to the cytoplasmic granule. It catalyses the reaction a 5'-end NAD(+)-phospho-ribonucleoside in mRNA + H2O = a 5'-end phospho-adenosine-phospho-ribonucleoside in mRNA + beta-nicotinamide D-ribonucleotide + 2 H(+). It carries out the reaction NAD(+) + H2O = beta-nicotinamide D-ribonucleotide + AMP + 2 H(+). The catalysed reaction is NADH + H2O = reduced beta-nicotinamide D-ribonucleotide + AMP + 2 H(+). The enzyme catalyses NADPH + H2O = reduced beta-nicotinamide D-ribonucleotide + adenosine 2',5'-bisphosphate + 2 H(+). In terms of biological role, mRNA decapping enzyme that specifically removes the nicotinamide adenine dinucleotide (NAD) cap from a subset of mRNAs by hydrolyzing the diphosphate linkage to produce nicotinamide mononucleotide (NMN) and 5' monophosphate mRNA. The NAD-cap is present at the 5'-end of some RNAs; in contrast to the canonical N7 methylguanosine (m7G) cap, the NAD cap promotes mRNA decay. Preferentially acts on NAD-capped transcripts in response to nutrient stress. Also acts on free nicotinamide adenine dinucleotide molecules: hydrolyzes NAD(H) into NMN(H) and AMP, and NADPH into NMNH and 2',5'-ADP. May act to regulate the concentration of peroxisomal nicotinamide nucleotide cofactors required for oxidative metabolism in this organelle. Regulates the levels of circadian clock components PER1, PER2, PER3 and CRY2 in the liver. The chain is NAD-capped RNA hydrolase NUDT12 from Bos taurus (Bovine).